The primary structure comprises 142 residues: Hemoglobin subunit pi (142 aa).

The Globin domain occupies 2 to 142 (ALTQAEKAAV…ISSVLTEKYR (141 aa)). Residues histidine 59 and histidine 88 each coordinate heme b.

The protein belongs to the globin family.

Functionally, the pi' chain is the counterpart of the alpha chain in the major early embryonic hemoglobin P. This chain is Hemoglobin subunit pi, found in Gallus gallus (Chicken).